The sequence spans 354 residues: UDP-glucose 4-epimerase 1 (354 aa).

An NAD(+)-binding site is contributed by 8-39 (TILVTGGAGYIGSHTVLQLLQLGFRVVVLDNL). Ser-133 is a binding site for substrate. Tyr-157 serves as the catalytic Proton acceptor.

The protein belongs to the NAD(P)-dependent epimerase/dehydratase family. Requires NAD(+) as cofactor.

It carries out the reaction UDP-alpha-D-glucose = UDP-alpha-D-galactose. The protein operates within carbohydrate metabolism; galactose metabolism. Its function is as follows. Catalyzes the interconversion between UDP-glucose and UDP-galactose. This chain is UDP-glucose 4-epimerase 1 (UGE-1), found in Oryza sativa subsp. japonica (Rice).